The primary structure comprises 704 residues: Elongation factor G (704 aa).

Positions 8–290 (ARYRNIGISA…AVIDYLPSPV (283 aa)) constitute a tr-type G domain. GTP contacts are provided by residues 17 to 24 (AHIDAGKT), 88 to 92 (DTPGH), and 142 to 145 (NKMD).

The protein belongs to the TRAFAC class translation factor GTPase superfamily. Classic translation factor GTPase family. EF-G/EF-2 subfamily.

It localises to the cytoplasm. Functionally, catalyzes the GTP-dependent ribosomal translocation step during translation elongation. During this step, the ribosome changes from the pre-translocational (PRE) to the post-translocational (POST) state as the newly formed A-site-bound peptidyl-tRNA and P-site-bound deacylated tRNA move to the P and E sites, respectively. Catalyzes the coordinated movement of the two tRNA molecules, the mRNA and conformational changes in the ribosome. This is Elongation factor G from Cronobacter sakazakii (strain ATCC BAA-894) (Enterobacter sakazakii).